The sequence spans 137 residues: Insulin-like peptide 2 (137 aa).

Residues 1-26 (MSKPLSFISMVAVILLASSTVKLAQG) form the signal peptide. Disulfide bonds link cysteine 29-cysteine 119, cysteine 41-cysteine 132, and cysteine 118-cysteine 123. The propeptide at 53-104 (AMPGADSDLDALNPLQFVQEFEEEDNSISEPLRSALFPGSYLGGVLNSLAEV) is connecting peptide.

The protein belongs to the insulin family. In terms of assembly, heterodimer of a B chain and an A chain linked by two disulfide bonds. In terms of tissue distribution, broadly expressed at a low level in the embryonic mesoderm, beginning at stage 12. Expressed at a high level in the embryonic anterior midgut, with expression diminishing at late stage 16. Expressed at a low level in larval imaginal disks. Expressed at a high level in larval salivary glands and in seven cells of each larval brain hemisphere that may correspond to neurosecretory cells.

The protein localises to the secreted. Possible ligand of InR/insulin-like receptor. Its function is as follows. Plays a role in regulating body size by increasing cell size and cell number of individual organs. Probably mediates its growth effects by acting as a ligand for the insulin receptor and transducing a signal via the Chico/PI3K/Akt(PKB) pathway. This is Insulin-like peptide 2 from Drosophila melanogaster (Fruit fly).